The primary structure comprises 245 residues: Lytic switch protein BZLF1 (245 aa).

Residues methionine 1–serine 167 are transactivation. Residues threonine 14 and threonine 159 each carry the phosphothreonine modification. Positions glycine 145–serine 167 are disordered. A Bipartite nuclear localization signal motif is present at residues arginine 157–lysine 194. Residues serine 167, serine 173, and serine 186 each carry the phosphoserine modification. Residues lysine 178–histidine 195 are basic motif. Residues lysine 178–aspartate 228 enclose the bZIP domain. The tract at residues leucine 196–aspartate 228 is leucine-zipper. The interval serine 229–phenylalanine 245 is accessory activation domain.

It belongs to the bZIP family. As to quaternary structure, homodimer. Interacts (via b-ZIP domain) with the DNA polymerase processivity factor BMRF1 (via N-terminus); this interaction may inhibit BZLF1-induced transcription of the BMRF1 promoter. Interacts with human UBN1, CRTC2 and RACK1. Interacts (via N-terminus) with human PAX5 (via N-terminus); this interaction inhibits BZLF1-mediated lytic viral reactivation. Interacts (via leucine-zipper domain) with host CEBPA; this interaction induces G1 host cell cycle arrest. Interacts (via C-terminus) with host TP53BP1 (via C-terminus); this interaction is involved in the activation of the viral lytic cycle. Interacts with host chromatin-remodeling ATPase INO80; this interaction participates to the activation of early lytic viral genes by BZLF1. Interacts with host regulator of chromatin SMARCA5/hSNF2H; this interaction participates to the activation of early lytic viral genes by BZLF1. Interacts with host PLSCR1/Phospholipid scramblase 1; this interaction negatively regulates the transcriptional regulatory activity of BZLF1 by preventing the formation of the BZLF1-CBP complex.

The protein resides in the host nucleus. In terms of biological role, transcription factor that acts as a molecular switch to induce the transition from the latent to the lytic or productive phase of the virus cycle. Mediates the switch from the latent to the lytic cycle of infection in cells containing a highly methylated viral genome. Probably binds to silenced chromatin and recruits host chromatin-remodeling enzymes. Regulates this switch by binding to 2 types of ZEBRA response elements (ZREs): the CpG-free AP-1 like elements (latency) and the methylated CpG-containing elements (lytic replication). Activates preferentially the methylated forms of the viral lytic R (BRLF1) and Na (BRRF1) gene promoters, the latters being the first genes activated during Z-mediated reactivation in latently infected cells. BZLF1 and BRLF1 act together to trigger lytic replication. Also binds the lytic origin of replication, oriLyt. Induces G1 cell cycle arrest by stabilizing the host CCAAT/enhancer binding protein CEBPA. This function is important because the lytic cycle preferentially takes place in host cells arrested in G1. This is Lytic switch protein BZLF1 from Homo sapiens (Human).